A 441-amino-acid polypeptide reads, in one-letter code: Bacteria-responsive protein 1 (441 aa).

The signal sequence occupies residues 1–18; the sequence is MWFFKVGALLFLAALVSA. Residue N20 is glycosylated (N-linked (GlcNAc...) asparagine). The GH18 domain maps to 25–441; it reads PKVLCYYDGQ…PILRAAKYRL (417 aa). C29 and C56 form a disulfide bridge. Residue N225 is glycosylated (N-linked (GlcNAc...) asparagine).

It belongs to the glycosyl hydrolase 18 family. IDGF subfamily. Salivary gland (at protein level).

It is found in the secreted. Its function is as follows. Promotes recruitment of host neutrophils at the bite site. Induces expression of IL1B and IL6 in the skin of the host. In terms of biological role, (Microbial infection) Enhances Zika virus replication and exacerbates disease pathogenesis in the host. The sequence is that of Bacteria-responsive protein 1 from Aedes aegypti (Yellowfever mosquito).